Here is a 227-residue protein sequence, read N- to C-terminus: Cytidylate kinase (227 aa).

12–20 (GPSGAGKGT) contributes to the ATP binding site.

Belongs to the cytidylate kinase family. Type 1 subfamily.

It is found in the cytoplasm. The enzyme catalyses CMP + ATP = CDP + ADP. It carries out the reaction dCMP + ATP = dCDP + ADP. This is Cytidylate kinase from Marinomonas sp. (strain MWYL1).